Here is a 320-residue protein sequence, read N- to C-terminus: PUP1 protein homolog (320 aa).

The next 2 helical transmembrane spans lie at 66–85 (MWGGWLGFSAVFLTPFAYRY) and 100–119 (FVLGVMALFFATNFAGRSMY). Residues 205-320 (GGVFNGSPFM…QSGRYGGNRS (116 aa)) form a disordered region. Serine 230 bears the Phosphoserine mark. Residues 253-266 (GDNSSSSSWENIRN) are compositionally biased toward polar residues. The segment covering 267-284 (TSRDQSQESDASVDHESD) has biased composition (basic and acidic residues).

Belongs to the PUP1 family.

The protein localises to the mitochondrion membrane. This is PUP1 protein homolog from Saccharomyces cerevisiae (strain ATCC 204508 / S288c) (Baker's yeast).